A 544-amino-acid polypeptide reads, in one-letter code: Chaperonin GroEL (544 aa).

ATP-binding positions include 30–33, K51, 87–91, G415, 481–483, and D497; these read TLGP, DGTTT, and DAL.

Belongs to the chaperonin (HSP60) family. Forms a cylinder of 14 subunits composed of two heptameric rings stacked back-to-back. Interacts with the co-chaperonin GroES.

Its subcellular location is the cytoplasm. The catalysed reaction is ATP + H2O + a folded polypeptide = ADP + phosphate + an unfolded polypeptide.. In terms of biological role, together with its co-chaperonin GroES, plays an essential role in assisting protein folding. The GroEL-GroES system forms a nano-cage that allows encapsulation of the non-native substrate proteins and provides a physical environment optimized to promote and accelerate protein folding. In Chlamydia trachomatis serovar D (strain ATCC VR-885 / DSM 19411 / UW-3/Cx), this protein is Chaperonin GroEL.